Reading from the N-terminus, the 318-residue chain is Geranylfarnesyl diphosphate synthase (318 aa).

The isopentenyl diphosphate site is built by K31, R34, and H65. Mg(2+) contacts are provided by D72 and D76. An all-trans-polyprenyl diphosphate is bound at residue R81. R82 lines the isopentenyl diphosphate pocket. Positions 166, 167, and 204 each coordinate an all-trans-polyprenyl diphosphate.

The protein belongs to the FPP/GGPP synthase family. As to quaternary structure, homodimer. Mg(2+) serves as cofactor.

It catalyses the reaction isopentenyl diphosphate + (2E,6E,10E)-geranylgeranyl diphosphate = (2E,6E,10E,14E)-geranylfarnesyl diphosphate + diphosphate. Probably involved in biosynthesis of the precursor for C25 (sesterterpanyl chain) moiety of C25-C25 diether (2,3-di-O-sesterterpanyl-sn-glycero) membrane lipid. Catalyzes the condensation of isopentenyl pyrophosphate with the allylic pyrophosphates to yield all-trans geranylfarnesyl diphosphate (GFPP). Geranylgeranyl diphosphate (GGPP) is the preferred substrate, however methylallyl diphosphate (DMAPP), farnesyl diphosphate (FPP) and geranyl diphosphate (GPP) can also be used as allylic substrate. In Aeropyrum pernix, this protein is Geranylfarnesyl diphosphate synthase (fgs).